Consider the following 233-residue polypeptide: Upstream activation factor subunit spp27 (233 aa).

Positions 1–53 constitute a DEK-C domain; that stretch reads MEEYETDIKQILGTVDRQTVSAKQVRQLLEERRKVDLSAHKKDLNALILKCFD. Disordered stretches follow at residues 55–122 and 194–233; these read TAAP…KPMK and IPDD…ESTA. In terms of domain architecture, SWIB/MDM2 spans 116 to 193; the sequence is PLNKPMKLSP…NKYLTNLMTK (78 aa). Positions 194-208 are enriched in basic and acidic residues; that stretch reads IPDDQLPKPQPKNEE.

Component of the UAF (upstream activation factor) complex which consists of spp27/uaf30, rrn5, rrn10, and histones H3 and H4. Interacts with rrn10.

It is found in the cytoplasm. It localises to the nucleus. In terms of biological role, component of the UAF (upstream activation factor) complex which interacts with the upstream element of the RNA polymerase I promoter and forms a stable preinitiation complex. UAF seems to stimulate basal transcription to a fully activated level. The sequence is that of Upstream activation factor subunit spp27 (spp27) from Schizosaccharomyces pombe (strain 972 / ATCC 24843) (Fission yeast).